A 385-amino-acid chain; its full sequence is Chaperone protein DnaJ (385 aa).

Residues 5–70 (DFYEVLGVSR…QKKAAYDQYG (66 aa)) enclose the J domain. The CR-type zinc-finger motif lies at 137–214 (GVSKEIEVPT…CHGQGRKQKT (78 aa)). The Zn(2+) site is built by Cys150, Cys153, Cys167, Cys170, Cys189, Cys192, Cys202, and Cys205. CXXCXGXG motif repeat units lie at residues 150-157 (CDTCDGSG), 167-174 (CGTCHGHG), 189-196 (CPTCHGKG), and 202-209 (CNECHGQG).

Belongs to the DnaJ family. As to quaternary structure, homodimer. Zn(2+) is required as a cofactor.

The protein localises to the cytoplasm. Its function is as follows. Participates actively in the response to hyperosmotic and heat shock by preventing the aggregation of stress-denatured proteins and by disaggregating proteins, also in an autonomous, DnaK-independent fashion. Unfolded proteins bind initially to DnaJ; upon interaction with the DnaJ-bound protein, DnaK hydrolyzes its bound ATP, resulting in the formation of a stable complex. GrpE releases ADP from DnaK; ATP binding to DnaK triggers the release of the substrate protein, thus completing the reaction cycle. Several rounds of ATP-dependent interactions between DnaJ, DnaK and GrpE are required for fully efficient folding. Also involved, together with DnaK and GrpE, in the DNA replication of plasmids through activation of initiation proteins. The polypeptide is Chaperone protein DnaJ (Vibrio harveyi (Beneckea harveyi)).